Consider the following 477-residue polypeptide: MNVLFISSEVAPFSKTGGLGDVAGALPAALASLGHDVKVITPRYRDLRGAERLEPTGQSLLLRFPFGELSGPILSARVSERLEVLFLENAFLFGNRHGLYGDAGGAFADNHRRFAYLSVGALQAAQRLRFIPDIIHANDWQTGLVPVALRRGFQTGPLAHAKSVFTIHNLAYQGQFPKDVMGDLALPWDLFTAHDGLEFHDTVNFLKAGLVFSDALTTVSPTYAREIQTPEQGYGLDGLLRHRAHRLHGILNGVDTHEWNPEDDAFLPARYGLKDLSGKAVCKRELLARFGLEDGPAPVFGFVSRLAWQKGMDLLLEALPAALHADIRVVGVGSGEGPLEEGLLALQSRYPKQVGVHIGFDPGLSHLVEAGADFFLMPSRYEPCGLNQMYSLRYGTVPIVRATGGLVDTVEGGLDGNGILFEAFHKSALLAAIRRALALYADPSRLDEFRRRGMEKDFSWGASGRRYEALFHDLVAE.

Residue lysine 15 participates in ADP-alpha-D-glucose binding.

The protein belongs to the glycosyltransferase 1 family. Bacterial/plant glycogen synthase subfamily.

It carries out the reaction [(1-&gt;4)-alpha-D-glucosyl](n) + ADP-alpha-D-glucose = [(1-&gt;4)-alpha-D-glucosyl](n+1) + ADP + H(+). The protein operates within glycan biosynthesis; glycogen biosynthesis. Its function is as follows. Synthesizes alpha-1,4-glucan chains using ADP-glucose. This is Glycogen synthase from Myxococcus xanthus (strain DK1622).